Reading from the N-terminus, the 211-residue chain is Superoxide dismutase [Fe] (211 aa).

The Fe cation site is built by histidine 31, histidine 79, aspartate 165, and histidine 169.

The protein belongs to the iron/manganese superoxide dismutase family. In terms of assembly, homotetramer. Fe cation is required as a cofactor.

The enzyme catalyses 2 superoxide + 2 H(+) = H2O2 + O2. Destroys superoxide anion radicals which are normally produced within the cells and which are toxic to biological systems. The chain is Superoxide dismutase [Fe] (sod) from Pyrobaculum aerophilum (strain ATCC 51768 / DSM 7523 / JCM 9630 / CIP 104966 / NBRC 100827 / IM2).